Reading from the N-terminus, the 204-residue chain is High frequency lysogenization protein HflD homolog (204 aa).

It belongs to the HflD family.

Its subcellular location is the cytoplasm. The protein resides in the cell inner membrane. This is High frequency lysogenization protein HflD homolog from Stenotrophomonas maltophilia (strain R551-3).